We begin with the raw amino-acid sequence, 344 residues long: Heat-inducible transcription repressor HrcA (344 aa).

It belongs to the HrcA family.

Its function is as follows. Negative regulator of class I heat shock genes (grpE-dnaK-dnaJ and groELS operons). Prevents heat-shock induction of these operons. This is Heat-inducible transcription repressor HrcA from Streptococcus pneumoniae serotype 19F (strain G54).